A 523-amino-acid polypeptide reads, in one-letter code: Ribonuclease Y (523 aa).

A helical membrane pass occupies residues 7–24 (LSSLASALLAGGGTYLVY). Residues 213–279 (LINVVNLPND…TRTIEALVED (67 aa)) form the KH domain. Residues 339-432 (ALGHSLEVAN…VCAADALSAA (94 aa)) form the HD domain.

This sequence belongs to the RNase Y family.

The protein resides in the cell membrane. Functionally, endoribonuclease that initiates mRNA decay. In Wolinella succinogenes (strain ATCC 29543 / DSM 1740 / CCUG 13145 / JCM 31913 / LMG 7466 / NCTC 11488 / FDC 602W) (Vibrio succinogenes), this protein is Ribonuclease Y.